We begin with the raw amino-acid sequence, 258 residues long: Phosphoribosylaminoimidazole-succinocarboxamide synthase (258 aa).

Belongs to the SAICAR synthetase family.

It carries out the reaction 5-amino-1-(5-phospho-D-ribosyl)imidazole-4-carboxylate + L-aspartate + ATP = (2S)-2-[5-amino-1-(5-phospho-beta-D-ribosyl)imidazole-4-carboxamido]succinate + ADP + phosphate + 2 H(+). It participates in purine metabolism; IMP biosynthesis via de novo pathway; 5-amino-1-(5-phospho-D-ribosyl)imidazole-4-carboxamide from 5-amino-1-(5-phospho-D-ribosyl)imidazole-4-carboxylate: step 1/2. In Rhizorhabdus wittichii (strain DSM 6014 / CCUG 31198 / JCM 15750 / NBRC 105917 / EY 4224 / RW1) (Sphingomonas wittichii), this protein is Phosphoribosylaminoimidazole-succinocarboxamide synthase.